The primary structure comprises 512 residues: N-acetyltryptophan 6-hydroxylase ivoC (512 aa).

A helical transmembrane segment spans residues 6–26; the sequence is LVFSFPAWALLLVLTLLYTLY. The N-linked (GlcNAc...) asparagine glycan is linked to Asn118. Cys453 is a binding site for heme.

It belongs to the cytochrome P450 family. Requires heme as cofactor.

Its subcellular location is the membrane. The protein operates within pigment biosynthesis. Functionally, N-acetyltryptophan 6-hydroxylase; part of the pathway that mediates the biosynthesis of the gray-brown conidiophore pigment. The first step of the pathway is performed by the nonribosomal peptide synthetase ivoA that catalyzes ATP-dependent unidirectional stereoinversion of L-tryptophan to D-tryptophan with complete conversion. While the stereoinversion is catalyzed by the epimerization (E) domain of ivoA, the terminal condensation (C) domain stereoselectively hydrolyzes D-tryptophanyl-S-phosphopantetheine thioester and thus represents a non-canonical C domain function. D-tryptophan is acetylated, probably by an endogenous acetyltransferase. N-acetyltryptophan is further 6-hydroxylated into N-acetyl-6-hydroxytryptophan (AHT) by the cytochrome P450 monooxygenase ivoC. N-acetyl-6-hydroxytryptophan is substrate of the N-acetyl-6-hydroxytryptophan oxidase ivoB to produce the gray-brown conidiophore pigment. The polypeptide is N-acetyltryptophan 6-hydroxylase ivoC (Emericella nidulans (strain FGSC A4 / ATCC 38163 / CBS 112.46 / NRRL 194 / M139) (Aspergillus nidulans)).